The sequence spans 96 residues: Large ribosomal subunit protein bL28 (96 aa).

It belongs to the bacterial ribosomal protein bL28 family.

The chain is Large ribosomal subunit protein bL28 from Agrobacterium fabrum (strain C58 / ATCC 33970) (Agrobacterium tumefaciens (strain C58)).